The primary structure comprises 126 residues: Holo-[acyl-carrier-protein] synthase (126 aa).

Mg(2+)-binding residues include Asp-9 and Glu-58.

The protein belongs to the P-Pant transferase superfamily. AcpS family. Mg(2+) serves as cofactor.

The protein localises to the cytoplasm. The catalysed reaction is apo-[ACP] + CoA = holo-[ACP] + adenosine 3',5'-bisphosphate + H(+). In terms of biological role, transfers the 4'-phosphopantetheine moiety from coenzyme A to a Ser of acyl-carrier-protein. The sequence is that of Holo-[acyl-carrier-protein] synthase from Sodalis glossinidius (strain morsitans).